We begin with the raw amino-acid sequence, 507 residues long: MTMTHQQDLKGVFTAKDLDFKPAGKITKKDLNTGVTKAEYAVRGAIPTRADELKEELKKNPEVLPFDDIINANIGNPQQLDQKPLTFTRQVLAILEYPEILRVGHNELASLNLFSRDALERAERLLNDIGGSIGAYSHSQGVPGIRQTVADFITRRDGGEPATPEDIYLTTGASSAATSLLSLLCKDSQTGLLIPIPQYPLYTASASLFNAQVLPYYLDEESNWSTNSDEIEKVVQDALKKQIRPSVLIVINPGNPTGAVLSEETIARICLIAAKYGITIISDEVYQENIFNDVKFHSMKKVLRKLQHLYPGKFDNVQLASLHSISKGFMDECGQRGGYMEIIGFSQEIRDALFKLMSISICSVVTGQAVVDLMVKPPQPGDESYEQDHDERLKIFHEMRTRANLLYETFKELEGIECQKPQGAMYLFPRLVLPKKALCESERLGIEPDEFYCTSLLESTGICTVPGSGFGQRPGTYHVRTTFLAPGTKWIQDWKEFHQDFFSKYRN.

5 residues coordinate pyridoxal 5'-phosphate: A173, S174, Y199, N255, and S324. Position 327 is an N6-(pyridoxal phosphate)lysine (K327). Residue R336 participates in pyridoxal 5'-phosphate binding.

The protein belongs to the class-I pyridoxal-phosphate-dependent aminotransferase family. Alanine aminotransferase subfamily. In terms of assembly, homodimer. Requires pyridoxal 5'-phosphate as cofactor.

The protein localises to the cytoplasm. It is found in the nucleus. Its function is as follows. Inactive alanine aminotransferase. Forms a catalytically active Schiff base with PLP, but lacks alanine transaminase activity, probably due to an altered structural conformation of the dimeric enzyme. This suggests this protein may have a yet undiscovered physiological function. The chain is Inactive alanine aminotransferase (ALT2) from Saccharomyces cerevisiae (strain ATCC 204508 / S288c) (Baker's yeast).